We begin with the raw amino-acid sequence, 228 residues long: Response regulator MprA (228 aa).

The Response regulatory domain maps to 2–116; the sequence is RILVVDDDRA…ELLARMRALL (115 aa). Aspartate 46 bears the 4-aspartylphosphate mark. A DNA-binding region (ompR/PhoB-type) is located at residues 127–225; it reads SVAMTFSDLT…VRGVGYVLRE (99 aa).

In terms of processing, phosphorylated and dephosphorylated by MprB.

It is found in the cytoplasm. In terms of biological role, member of the two-component regulatory system MprB/MprA which contributes to maintaining a balance among several systems involved in stress resistance and is required for establishment and maintenance of persistent infection in the host. Functions as a transcriptional regulator that recognizes a 19-bp nucleotide motif comprizing two loosely conserved 8-bp direct DNA-binding motif repeats separated by a 3-bp spacer region. In Mycobacterium avium (strain 104), this protein is Response regulator MprA (mprA).